The primary structure comprises 439 residues: Xaa-Pro dipeptidase (439 aa).

5 residues coordinate Mn(2+): Asp244, Asp255, His335, Glu380, and Glu419.

It belongs to the peptidase M24B family. Bacterial-type prolidase subfamily. It depends on Mn(2+) as a cofactor.

The enzyme catalyses Xaa-L-Pro dipeptide + H2O = an L-alpha-amino acid + L-proline. In terms of biological role, splits dipeptides with a prolyl residue in the C-terminal position. This Shewanella sp. (strain MR-7) protein is Xaa-Pro dipeptidase.